The primary structure comprises 201 residues: 7-methyl-GTP pyrophosphatase (201 aa).

The active-site Proton acceptor is D73.

The protein belongs to the Maf family. YceF subfamily. A divalent metal cation serves as cofactor.

Its subcellular location is the cytoplasm. The catalysed reaction is N(7)-methyl-GTP + H2O = N(7)-methyl-GMP + diphosphate + H(+). Nucleoside triphosphate pyrophosphatase that hydrolyzes 7-methyl-GTP (m(7)GTP). May have a dual role in cell division arrest and in preventing the incorporation of modified nucleotides into cellular nucleic acids. This is 7-methyl-GTP pyrophosphatase from Thiobacillus denitrificans (strain ATCC 25259 / T1).